A 117-amino-acid polypeptide reads, in one-letter code: DNA-directed RNA polymerase subunit omega (117 aa).

This sequence belongs to the RNA polymerase subunit omega family. As to quaternary structure, the RNAP catalytic core consists of 2 alpha, 1 beta, 1 beta' and 1 omega subunit. When a sigma factor is associated with the core the holoenzyme is formed, which can initiate transcription.

The catalysed reaction is RNA(n) + a ribonucleoside 5'-triphosphate = RNA(n+1) + diphosphate. Its function is as follows. Promotes RNA polymerase assembly. Latches the N- and C-terminal regions of the beta' subunit thereby facilitating its interaction with the beta and alpha subunits. The protein is DNA-directed RNA polymerase subunit omega of Ruegeria pomeroyi (strain ATCC 700808 / DSM 15171 / DSS-3) (Silicibacter pomeroyi).